An 836-amino-acid polypeptide reads, in one-letter code: Protein translocase subunit SecA (836 aa).

ATP is bound by residues Q85, 103-107 (GEGKT), and D492. Positions 786–817 (REQVAKETSTNQGGDDTLKKQPIKKEPKIGRN) are disordered. A compositionally biased stretch (basic and acidic residues) spans 801-816 (DTLKKQPIKKEPKIGR). The Zn(2+) site is built by C820, C822, C831, and C832.

The protein belongs to the SecA family. As to quaternary structure, monomer and homodimer. Part of the essential Sec protein translocation apparatus which comprises SecA, SecYEG and auxiliary proteins SecDF. Other proteins may also be involved. Requires Zn(2+) as cofactor.

The protein resides in the cell membrane. It localises to the cytoplasm. The enzyme catalyses ATP + H2O + cellular proteinSide 1 = ADP + phosphate + cellular proteinSide 2.. Its function is as follows. Part of the Sec protein translocase complex. Interacts with the SecYEG preprotein conducting channel. Has a central role in coupling the hydrolysis of ATP to the transfer of proteins into and across the cell membrane, serving as an ATP-driven molecular motor driving the stepwise translocation of polypeptide chains across the membrane. The chain is Protein translocase subunit SecA from Clostridium tetani (strain Massachusetts / E88).